The primary structure comprises 92 residues: Small ribosomal subunit protein uS19c (92 aa).

Belongs to the universal ribosomal protein uS19 family.

It localises to the plastid. The protein localises to the chloroplast. Functionally, protein S19 forms a complex with S13 that binds strongly to the 16S ribosomal RNA. The protein is Small ribosomal subunit protein uS19c of Phaseolus angularis (Azuki bean).